Reading from the N-terminus, the 518-residue chain is MEEFKGYFELDRSRQHDFLYPLLFREYIYALAHDHGLNRSILFKNAGYDKKSSSIVVKRLITRMYQQNPLIFSANDSIQNPFFGHNKNLYSQIISEGFAVIVEIPFSFSLRLVSSLERKEIAKSHNLRSIHSIFPFLEDKFSHLDYVSDVLIPYHIHLEILVQTLRYWVKDASSLHLLRFFLHEYWNSLITPKKHITLFSKGNPRLFLFLYNSHICEYESTFLFLRNQSSHLRSTSSGIFFERIYFYVKIEHFAKVFFDNDFQCILWFFKDPFMHYVRYQGKSILGSKDTPLLMNKWKYYLVTLWQYHFYAWFQPGRIDINQLCKYSLDFLGYRSSVPLNSSVVRSQMLENSFLINNAMKKFETIVPIIPLIGSLSKANFCNTLGHPISKPTRADSSDSDIIDRFLRICRNLSHYHSGSSKKKSLYRVKYILRLSCVKTLARKHKRTVRTFFKRLGSEFLEEFLTEEEVVLSLIFPRTYSTSRRLYRGQIWYLDITSINDLVNYENDWLLDHGNVNYL.

The protein belongs to the intron maturase 2 family. MatK subfamily.

It localises to the plastid. The protein resides in the chloroplast. Functionally, usually encoded in the trnK tRNA gene intron. Probably assists in splicing its own and other chloroplast group II introns. The protein is Maturase K of Syzygium cumini (Java plum).